The primary structure comprises 419 residues: 20-hydroxy-prefusarin hydrolase FUS2 (419 aa).

Ser-238 is an active-site residue.

It belongs to the AB hydrolase superfamily. FUS2 hydrolase family.

Its pathway is mycotoxin biosynthesis. In terms of biological role, 20-hydroxy-prefusarin hydrolase; part of the gene cluster that mediates the biosynthesis of the mycotoxin fusarin C. Within the cluster, FUS1, FUS2, FUS8 and FUS9 are sufficient for fusarin production. The roles of the other FUS members are yet undetermined. The fusarin C synthetase FUS1 is responsible for the condensation of one acetyl-coenzyme A (CoA) unit with six malonyl-CoA units and the amide linkage of the arising heptaketide and homoserine, subsequently releasing the first intermediate, prefusarin, as an alcohol with an open ring structure. The cytochrome P450 monooxygenase FUS8 participates in multiple oxidation processes at carbon C-20 and is able to use the FUS1 product as substrate, resulting in formation of 20-hydroxy-prefusarin. This reaction seems to be essential before the 2-pyrrolidone ring closure can be catalyzed by FUS2, generating 20-hydroxy-fusarin. FUS8 is able to further oxidizes carbon C-20 after ring closure, resulting in the formation of carboxy-fusarin C. As the last step, FUS9 methylates the hydroxyl group at C-21 to generate fusarin C. Fusarin C can then rearrange to epi-fusarin C, the (z)-isomers, and fusarin A and fusarin D. In Gibberella moniliformis (strain M3125 / FGSC 7600) (Maize ear and stalk rot fungus), this protein is 20-hydroxy-prefusarin hydrolase FUS2.